Consider the following 198-residue polypeptide: Imidazoleglycerol-phosphate dehydratase (198 aa).

Belongs to the imidazoleglycerol-phosphate dehydratase family.

The protein resides in the cytoplasm. It catalyses the reaction D-erythro-1-(imidazol-4-yl)glycerol 3-phosphate = 3-(imidazol-4-yl)-2-oxopropyl phosphate + H2O. The protein operates within amino-acid biosynthesis; L-histidine biosynthesis; L-histidine from 5-phospho-alpha-D-ribose 1-diphosphate: step 6/9. The polypeptide is Imidazoleglycerol-phosphate dehydratase (Nitratidesulfovibrio vulgaris (strain DP4) (Desulfovibrio vulgaris)).